The sequence spans 600 residues: DNA mismatch repair protein MutL (600 aa).

A disordered region spans residues 348 to 375 (QPQAQRPQTAWSAETSPFRPYQPTTGFS). A compositionally biased stretch (polar residues) spans 349–362 (PQAQRPQTAWSAET).

It belongs to the DNA mismatch repair MutL/HexB family.

In terms of biological role, this protein is involved in the repair of mismatches in DNA. It is required for dam-dependent methyl-directed DNA mismatch repair. May act as a 'molecular matchmaker', a protein that promotes the formation of a stable complex between two or more DNA-binding proteins in an ATP-dependent manner without itself being part of a final effector complex. This chain is DNA mismatch repair protein MutL, found in Rhizobium leguminosarum bv. trifolii (strain WSM2304).